Consider the following 120-residue polypeptide: Glycine cleavage system H protein (120 aa).

Residues 17–99 enclose the Lipoyl-binding domain; the sequence is VATVGITEHA…QGAAWFFKLK (83 aa). At Lys-58 the chain carries N6-lipoyllysine.

The protein belongs to the GcvH family. The glycine cleavage system is composed of four proteins: P, T, L and H. (R)-lipoate serves as cofactor.

Its function is as follows. The glycine cleavage system catalyzes the degradation of glycine. The H protein shuttles the methylamine group of glycine from the P protein to the T protein. The polypeptide is Glycine cleavage system H protein (Sinorhizobium fredii (strain NBRC 101917 / NGR234)).